Consider the following 301-residue polypeptide: Elongation factor Ts (301 aa).

The segment at 82 to 85 is involved in Mg(2+) ion dislocation from EF-Tu; sequence TDFV.

It belongs to the EF-Ts family.

It localises to the cytoplasm. Functionally, associates with the EF-Tu.GDP complex and induces the exchange of GDP to GTP. It remains bound to the aminoacyl-tRNA.EF-Tu.GTP complex up to the GTP hydrolysis stage on the ribosome. The polypeptide is Elongation factor Ts (Hyphomonas neptunium (strain ATCC 15444)).